A 457-amino-acid chain; its full sequence is Bifunctional protein GlmU (457 aa).

Positions 1 to 232 (MNNLAAVILA…PAEVMGINDR (232 aa)) are pyrophosphorylase. UDP-N-acetyl-alpha-D-glucosamine is bound by residues 9-12 (LAAG), Lys23, Gln75, and 80-81 (GT). Position 105 (Asp105) interacts with Mg(2+). Positions 142, 157, 172, and 230 each coordinate UDP-N-acetyl-alpha-D-glucosamine. A Mg(2+)-binding site is contributed by Asn230. Residues 233 to 253 (AQLAEAGQLLRGRINKALMLD) are linker. The N-acetyltransferase stretch occupies residues 254 to 457 (GTTLIDPQTT…NKEGWKLKKK (204 aa)). Arg336 and Lys354 together coordinate UDP-N-acetyl-alpha-D-glucosamine. The active-site Proton acceptor is the His366. Residues Tyr369 and Asn380 each coordinate UDP-N-acetyl-alpha-D-glucosamine. Residues 389-390 (NY), Ser408, Ala426, and Arg443 each bind acetyl-CoA.

This sequence in the N-terminal section; belongs to the N-acetylglucosamine-1-phosphate uridyltransferase family. It in the C-terminal section; belongs to the transferase hexapeptide repeat family. Homotrimer. The cofactor is Mg(2+).

Its subcellular location is the cytoplasm. The catalysed reaction is alpha-D-glucosamine 1-phosphate + acetyl-CoA = N-acetyl-alpha-D-glucosamine 1-phosphate + CoA + H(+). It carries out the reaction N-acetyl-alpha-D-glucosamine 1-phosphate + UTP + H(+) = UDP-N-acetyl-alpha-D-glucosamine + diphosphate. Its pathway is nucleotide-sugar biosynthesis; UDP-N-acetyl-alpha-D-glucosamine biosynthesis; N-acetyl-alpha-D-glucosamine 1-phosphate from alpha-D-glucosamine 6-phosphate (route II): step 2/2. It functions in the pathway nucleotide-sugar biosynthesis; UDP-N-acetyl-alpha-D-glucosamine biosynthesis; UDP-N-acetyl-alpha-D-glucosamine from N-acetyl-alpha-D-glucosamine 1-phosphate: step 1/1. It participates in bacterial outer membrane biogenesis; LPS lipid A biosynthesis. Catalyzes the last two sequential reactions in the de novo biosynthetic pathway for UDP-N-acetylglucosamine (UDP-GlcNAc). The C-terminal domain catalyzes the transfer of acetyl group from acetyl coenzyme A to glucosamine-1-phosphate (GlcN-1-P) to produce N-acetylglucosamine-1-phosphate (GlcNAc-1-P), which is converted into UDP-GlcNAc by the transfer of uridine 5-monophosphate (from uridine 5-triphosphate), a reaction catalyzed by the N-terminal domain. This is Bifunctional protein GlmU from Geotalea uraniireducens (strain Rf4) (Geobacter uraniireducens).